A 493-amino-acid chain; its full sequence is Ribose import ATP-binding protein RbsA (493 aa).

2 ABC transporter domains span residues 5-241 (LKIS…VGRR) and 252-491 (EKGE…AAAI). ATP is bound at residue 37 to 44 (GENGAGKS).

The protein belongs to the ABC transporter superfamily. Ribose importer (TC 3.A.1.2.1) family. In terms of assembly, the complex is composed of an ATP-binding protein (RbsA), two transmembrane proteins (RbsC) and a solute-binding protein (RbsB).

It localises to the cell inner membrane. It carries out the reaction D-ribose(out) + ATP + H2O = D-ribose(in) + ADP + phosphate + H(+). Part of the ABC transporter complex RbsABC involved in ribose import. Responsible for energy coupling to the transport system. This is Ribose import ATP-binding protein RbsA from Haemophilus influenzae (strain 86-028NP).